A 302-amino-acid polypeptide reads, in one-letter code: Recombination-associated protein RdgC (302 aa).

The protein belongs to the RdgC family.

Its subcellular location is the cytoplasm. It localises to the nucleoid. May be involved in recombination. The polypeptide is Recombination-associated protein RdgC (Actinobacillus succinogenes (strain ATCC 55618 / DSM 22257 / CCUG 43843 / 130Z)).